Consider the following 197-residue polypeptide: Imidazoleglycerol-phosphate dehydratase (197 aa).

The protein belongs to the imidazoleglycerol-phosphate dehydratase family.

It is found in the cytoplasm. It carries out the reaction D-erythro-1-(imidazol-4-yl)glycerol 3-phosphate = 3-(imidazol-4-yl)-2-oxopropyl phosphate + H2O. It functions in the pathway amino-acid biosynthesis; L-histidine biosynthesis; L-histidine from 5-phospho-alpha-D-ribose 1-diphosphate: step 6/9. The sequence is that of Imidazoleglycerol-phosphate dehydratase from Teredinibacter turnerae (strain ATCC 39867 / T7901).